Here is a 92-residue protein sequence, read N- to C-terminus: Small ribosomal subunit protein bS20 (92 aa).

Positions Met1–Ser23 are disordered. The segment covering Ala7 to His20 has biased composition (basic residues).

Belongs to the bacterial ribosomal protein bS20 family.

Functionally, binds directly to 16S ribosomal RNA. This is Small ribosomal subunit protein bS20 from Ectopseudomonas mendocina (strain ymp) (Pseudomonas mendocina).